A 487-amino-acid chain; its full sequence is Transmembrane protein 161B (487 aa).

The N-linked (GlcNAc...) asparagine glycan is linked to asparagine 34. Residues 107-127 (LVDFTVAATVVYLVTEVYYNF) form a helical membrane-spanning segment. A glycan (N-linked (GlcNAc...) asparagine) is linked at asparagine 135. 2 consecutive transmembrane segments (helical) span residues 136–156 (ISLVWCLLVLSFAIKVLFSLT) and 169–189 (SVCVTFGFFFFVKAMAVLIVT). N-linked (GlcNAc...) asparagine glycosylation is present at asparagine 203. Transmembrane regions (helical) follow at residues 228–248 (FKFFLAIFCSFIGAFLTFPGL), 265–285 (ITQTLLHINFLAPLFMVLLWV), 305–325 (LMTEATFDTLRLWLIILLCAL), 367–387 (VFYYLCVIALQYVAPLVMLLH), and 459–479 (LSFLTWWIAACLFSTSLFGLF).

It belongs to the TMEM161 family.

The protein localises to the cell membrane. Its function is as follows. Essential for maintaining normal cardiac rhythm in the developing heart and for neonatal survival. Inhibits potassium and calcium currents in the cardiomyocytes, this assists in timely action potential repolarization and thereby maintains normal cardiac rhythm. In Homo sapiens (Human), this protein is Transmembrane protein 161B (TMEM161B).